The following is a 705-amino-acid chain: SPbeta prophage-derived sublancin-168-processing and transport ATP-binding protein SunT (705 aa).

Residues 12-138 form the Peptidase C39 domain; sequence QFNSHDCGLA…SKFTNFILEI (127 aa). Residue Cys-18 is part of the active site. The next 6 membrane-spanning stretches (helical) occupy residues 167–187, 205–225, 281–301, 306–326, 388–408, and 418–438; these read IVFV…AGSF, LITI…FDFV, ANFV…VILY, ILFL…ILFF, VISN…IILW, and SMSL…LSSL. One can recognise an ABC transmembrane type-1 domain in the interval 168–450; that stretch reads VFVILLTSLF…ILSMQSDLQQ (283 aa). The ABC transporter domain maps to 483–705; it reads IKTVNLNIGA…SYSENKEYSI (223 aa). 516 to 523 provides a ligand contact to ATP; it reads GESGTGKS.

Belongs to the ABC transporter superfamily. SunT family. In terms of assembly, homodimer.

The protein resides in the cell membrane. SunT (TC 3.A.1.112.4) is required for production of the lantibiotic sublancin-168, probably by both processing the signal peptide and exporting the resulting mature lantibiotic. The polypeptide is SPbeta prophage-derived sublancin-168-processing and transport ATP-binding protein SunT (sunT) (Bacillus subtilis (strain 168)).